Consider the following 567-residue polypeptide: TNF receptor-associated factor 3 (567 aa).

Residues 1 to 26 (MESSKKMDAAGTLQPNPPLKLQPDRG) are disordered. A Glycyl cysteine thioester (Cys-Gly) (interchain with G-Cter in ubiquitin) cross-link involves residue Cys55. The segment at 67–76 (CGHRFCESCM) adopts an RING-type zinc-finger fold. Lys106 participates in a covalent cross-link: Glycyl lysine isopeptide (Lys-Gly) (interchain with G-Cter in ubiquitin). A Glycyl cysteine thioester (Cys-Gly) (interchain with G-Cter in ubiquitin) cross-link involves residue Cys123. 2 consecutive TRAF-type zinc fingers follow at residues 134–189 (VHLK…IKLQ) and 190–248 (KHED…QQIK). Residues Lys155 and Lys167 each participate in a glycyl lysine isopeptide (Lys-Gly) (interchain with G-Cter in ubiquitin) cross-link. A coiled-coil region spans residues 266-337 (SNSLEKKVSL…KLKELDKEIR (72 aa)). A Glycyl lysine isopeptide (Lys-Gly) (interchain with G-Cter in ubiquitin) cross-link involves residue Lys328. Positions 414–559 (NGVLIWKIRD…DDTIFIKVIV (146 aa)) constitute an MATH domain.

This sequence belongs to the TNF receptor-associated factor family. A subfamily. Homotrimer. Heterotrimer with TRAF2 and TRAF5. Interacts with LTBR/TNFRSF3, TNFRSF4, TNFRSF5/CD40, TNFRSF8/CD30, TNFRSF13C TNFRSF17/BCMA, TLR4 and EDAR. Interacts with MAP3K5, MAP3K14, TRAIP/TRIP, TDP2/TTRAP, TANK/ITRAF and TRAF3IP1. Interaction with TNFRSF5/CD40 is modulated by TANK/ITRAF, which competes for the same binding site. Interacts with TICAM1. Interacts with TRAFD1. Interacts with OTUB1, OTUB2 and OTUD5. Interacts with RNF216, OPTN and TBK1. Identified in a complex with TRAF2, MAP3K14 and BIRC3. Upon exposure to bacterial lipopolysaccharide (LPS), recruited to a transient complex containing TLR4, TRAF3, TRAF6, IKBKG, MAP3K7, MYD88, TICAM1, BIRC2, BIRC3 and UBE2N. Interacts (via RING-type zinc finger domain) with SRC. Interacts with CARD14. Interacts (via MATH domain) with PTPN22; the interaction promotes TRAF3 polyubiquitination. Interacts with MAVS. Directly interacts with DDX3X; this interaction stimulates TRAF3 'Lys-63' ubiquitination. Interacts with IRF3. Interacts with IKBKE in the course of viral infection. Interacts with TRIM35. Interacts with GAPDH; promoting TRAF3 ubiquitination. Interacts with PPP3CA and PPP3CB. Interacts with RALGDS. Interacts with FBXO11. Post-translationally, undergoes 'Lys-48'-linked polyubiquitination, leading to its proteasomal degradation in response to signaling by TNFSF13B, TLR4 or through CD40. 'Lys-48'-linked polyubiquitinated form is deubiquitinated by OTUD7B, preventing TRAF3 proteolysis and over-activation of non-canonical NF-kappa-B. Undergoes 'Lys-63'-linked ubiquitination during early stages of virus infection, and 'Lys-48'-linked ubiquitination during later stages. Undergoes both 'Lys-48'-linked and 'Lys-63'-linked ubiquitination in response to TLR3 and TLR4 signaling. 'Lys-63'-linked ubiquitination can be mediated by TRIM35. Deubiquitinated by OTUB1, OTUB2 and OTUD5. Undergoes 'Lys-63'-linked deubiquitination by MYSM1 to terminate the pattern-recognition receptors/PRRs pathways. Ubiquitinated at Lys-328 by the SCF(FBXL2) complex, leading to its degradation by the proteasome. In terms of processing, undergoes 'Lys-48'-linked polyubiquitination, leading to its proteasomal degradation in response to signaling by TNFSF13B, TLR4 or through CD40. 'Lys-48'-linked polyubiquitinated form is deubiquitinated by OTUD7B, preventing TRAF3 proteolysis and over-activation of non-canonical NF-kappa-B. Undergoes 'Lys-63'-linked ubiquitination during early stages of virus infection, and 'Lys-48'-linked ubiquitination during later stages. Undergoes both 'Lys-48'-linked and 'Lys-63'-linked ubiquitination in response to TLR3 and TLR4 signaling. 'Lys-63'-linked ubiquitination can be mediated by TRIM35. Deubiquitinated by OTUB1, OTUB2 and OTUD5. Undergoes 'Lys-63'-linked deubiquitination by MYSM1 to terminate the pattern-recognition receptors/PRRs pathways. Also undergoes 'Lys-29'-linked ubiquitination on Cys-55 and Cys-123 by NEDD4L; leading to increased 'Lys-48'- and 'Lys-63'-linked ubiquitination as well as increased binding to TBK1. TLR4 signals emanating from bacteria containing vesicles trigger 'Lys-33'-linked polyubiquitination that promotes the assembly of the exocyst complex thereby connecting innate immune signaling to the cellular trafficking apparatus. Deubiquitinated by USP25 during viral infection, leading to TRAF3 stabilization and type I interferon production. 'Lys-63'-linked ubiquitination by FBXO11 in a NEDD8-dependent manner promotes the amplification of IFN-I signaling. In terms of tissue distribution, detected in bone marrow macrophages and spleen B-cells (at protein level). In adult, highest in brain. Also found in kidney, heart, thymus, spleen, lung, muscle, testis and ovary. Not found in liver.

It is found in the cytoplasm. The protein localises to the endosome. Its subcellular location is the mitochondrion. It catalyses the reaction S-ubiquitinyl-[E2 ubiquitin-conjugating enzyme]-L-cysteine + [acceptor protein]-L-lysine = [E2 ubiquitin-conjugating enzyme]-L-cysteine + N(6)-ubiquitinyl-[acceptor protein]-L-lysine.. Functionally, cytoplasmic E3 ubiquitin ligase that regulates various signaling pathways, such as the NF-kappa-B, mitogen-activated protein kinase (MAPK) and interferon regulatory factor (IRF) pathways, and thus controls a lot of biological processes in both immune and non-immune cell types. In TLR and RLR signaling pathways, acts as an E3 ubiquitin ligase promoting the synthesis of 'Lys-63'-linked polyubiquitin chains on several substrates such as ASC that lead to the activation of the type I interferon response or the inflammasome. Following the activation of certain TLRs such as TLR4, acts as a negative NF-kappa-B regulator, possibly to avoid unregulated inflammatory response, and its degradation via 'Lys-48'-linked polyubiquitination is required for MAPK activation and production of inflammatory cytokines. Alternatively, when TLR4 orchestrates bacterial expulsion, TRAF3 undergoes 'Lys-33'-linked polyubiquitination and subsequently binds to RALGDS, mobilizing the exocyst complex to rapidly expel intracellular bacteria back for clearance. Also acts as a constitutive negative regulator of the alternative NF-kappa-B pathway, which controls B-cell survival and lymphoid organ development. Required for normal antibody isotype switching from IgM to IgG. Plays a role T-cell dependent immune responses. Down-regulates proteolytic processing of NFKB2, and thereby inhibits non-canonical activation of NF-kappa-B. Promotes ubiquitination and proteasomal degradation of MAP3K14. The protein is TNF receptor-associated factor 3 of Mus musculus (Mouse).